Consider the following 171-residue polypeptide: NADP-reducing hydrogenase subunit HndA (171 aa).

Positions 98, 103, 139, and 143 each coordinate [2Fe-2S] cluster.

The protein belongs to the complex I 24 kDa subunit family. In terms of assembly, heterotetramer composed of HndA, HndB, HndC and HndD subunits. HndA and HndB could form a heterodimeric intermediate in the electron transfer between the active site of hydrogenase subunit HndD and the NADP reduction site of the reducing subunit HndC. It depends on [2Fe-2S] cluster as a cofactor.

It catalyses the reaction H2 + NADP(+) = NADPH + H(+). With respect to regulation, inhibited by oxygen. Catalyzes the reduction of NADP in the presence of molecular H(2) to yield NADPH. In Solidesulfovibrio fructosivorans (Desulfovibrio fructosivorans), this protein is NADP-reducing hydrogenase subunit HndA (hndA).